The chain runs to 117 residues: Protein RALF-like 32 (117 aa).

Positions 1–26 (MEIKPSRIFSTITIFFLCLLLAHVTS) are cleaved as a signal peptide. The propeptide at 27–64 (KASSSSLCNGSVAECSSMVETEEMSVIMESWSSQRLTE) is removed in mature form. Asn-35 is a glycosylation site (N-linked (GlcNAc...) asparagine). The disordered stretch occupies residues 77 to 107 (RNQPACDGGKRGESYSTQCLPPPSNPYSRGC). Disulfide bonds link Cys-82/Cys-95 and Cys-107/Cys-113.

It belongs to the plant rapid alkalinization factor (RALF) family. Proteolytically cleaved, probably by S1P, a subtilisin-like serine protease (subtilase).

It localises to the secreted. Its function is as follows. Cell signaling peptide that may regulate plant stress, growth, and development. Mediates a rapid alkalinization of extracellular space by mediating a transient increase in the cytoplasmic Ca(2+) concentration leading to a calcium-dependent signaling events through a cell surface receptor and a concomitant activation of some intracellular mitogen-activated protein kinases. The chain is Protein RALF-like 32 (RALFL32) from Arabidopsis thaliana (Mouse-ear cress).